The sequence spans 548 residues: Biotin-dependent acetyl-/propionyl-coenzyme A carboxylase beta5 subunit (548 aa).

Residues 1 to 23 (MTSVTDRSAHSAERSTEHTIDIH) form a disordered region. The segment covering 7–21 (RSAHSAERSTEHTID) has biased composition (basic and acidic residues). The 257-residue stretch at 25–281 (TAGKLAELHK…NNSTDAPRYQ (257 aa)) folds into the CoA carboxyltransferase N-terminal domain. Residues 295-541 (DEDLELDTLI…ERKIAQLPPK (247 aa)) enclose the CoA carboxyltransferase C-terminal domain.

The protein belongs to the AccD/PCCB family. The biotin-dependent acyl-CoA carboxylase complex is composed of AccA3, which contains the biotin carboxylase (BC) and biotin carboxyl carrier protein (BCCP) domains, and AccD5, which contains the carboxyl transferase (CT) domain.

It catalyses the reaction N(6)-carboxybiotinyl-L-lysyl-[protein] + acetyl-CoA = N(6)-biotinyl-L-lysyl-[protein] + malonyl-CoA. The catalysed reaction is N(6)-carboxybiotinyl-L-lysyl-[protein] + propanoyl-CoA = methylmalonyl-CoA + N(6)-biotinyl-L-lysyl-[protein]. The protein operates within lipid metabolism; mycolic acid biosynthesis. Its function is as follows. Component of a biotin-dependent acyl-CoA carboxylase complex. This subunit transfers the CO2 from carboxybiotin to the CoA ester substrate. When associated with the alpha3 subunit AccA3, is involved in the carboxylation of acetyl-CoA and propionyl-CoA. The polypeptide is Biotin-dependent acetyl-/propionyl-coenzyme A carboxylase beta5 subunit (accD5) (Mycobacterium tuberculosis (strain CDC 1551 / Oshkosh)).